The primary structure comprises 247 residues: Carboxy-S-adenosyl-L-methionine synthase (247 aa).

Residues Y40, 65 to 67 (GAS), 90 to 91 (DN), 122 to 123 (DI), N137, and R204 contribute to the S-adenosyl-L-methionine site.

It belongs to the class I-like SAM-binding methyltransferase superfamily. Cx-SAM synthase family. Homodimer.

It catalyses the reaction prephenate + S-adenosyl-L-methionine = carboxy-S-adenosyl-L-methionine + 3-phenylpyruvate + H2O. Functionally, catalyzes the conversion of S-adenosyl-L-methionine (SAM) to carboxy-S-adenosyl-L-methionine (Cx-SAM). This Pseudomonas putida (strain ATCC 700007 / DSM 6899 / JCM 31910 / BCRC 17059 / LMG 24140 / F1) protein is Carboxy-S-adenosyl-L-methionine synthase.